The sequence spans 278 residues: Tryptophan synthase alpha chain (278 aa).

Catalysis depends on proton acceptor residues E49 and D60.

This sequence belongs to the TrpA family. Tetramer of two alpha and two beta chains.

The catalysed reaction is (1S,2R)-1-C-(indol-3-yl)glycerol 3-phosphate + L-serine = D-glyceraldehyde 3-phosphate + L-tryptophan + H2O. It functions in the pathway amino-acid biosynthesis; L-tryptophan biosynthesis; L-tryptophan from chorismate: step 5/5. The alpha subunit is responsible for the aldol cleavage of indoleglycerol phosphate to indole and glyceraldehyde 3-phosphate. The sequence is that of Tryptophan synthase alpha chain from Granulibacter bethesdensis (strain ATCC BAA-1260 / CGDNIH1).